The chain runs to 48 residues: Small polypeptide DEVIL 19 (48 aa).

The interval 13–44 is required for DVL/RTFL small polypeptide activity; it reads AFTSKCVSLVKEQRARLYILRRCATMLCCWYI. A helical transmembrane segment spans residues 25–42; it reads QRARLYILRRCATMLCCW.

Belongs to the DVL/RTFL small polypeptides family.

It localises to the cell membrane. Small polypeptide acting as a regulatory molecule which coordinates cellular responses required for differentiation, growth and development, probably by restricting polar cell proliferation in lateral organs and coordinating socket cell recruitment and differentiation at trichome sites. The polypeptide is Small polypeptide DEVIL 19 (Arabidopsis thaliana (Mouse-ear cress)).